A 121-amino-acid chain; its full sequence is RxLR effector protein PexRD2 (121 aa).

An N-terminal signal peptide occupies residues 1–18; sequence MRLSYVFVVFAASLLVTA. A RxLR-dEER motif is present at residues 38–56; sequence RLLRKHYTAAENDGDSEAR. The WY domain stretch occupies residues 57-121; that stretch reads ALNPEKMKTM…LNYVAEHTAV (65 aa).

It belongs to the RxLR effector family.

It localises to the secreted. It is found in the host cytoplasm. The protein resides in the host nucleus. Its function is as follows. Secreted effector involved in P.mirabilis colonization of host plants. May perturb the signaling of cell death associated with plant immunity, via interaction with a host MAP kinase. This chain is RxLR effector protein PexRD2, found in Phytophthora mirabilis.